A 204-amino-acid polypeptide reads, in one-letter code: High frequency lysogenization protein HflD homolog (204 aa).

It belongs to the HflD family.

The protein localises to the cytoplasm. Its subcellular location is the cell inner membrane. The sequence is that of High frequency lysogenization protein HflD homolog from Stenotrophomonas maltophilia (strain K279a).